The primary structure comprises 213 residues: Pyrrolidone-carboxylate peptidase (213 aa).

Residues Glu-78, Cys-141, and His-165 contribute to the active site.

The protein belongs to the peptidase C15 family. Homotetramer.

It localises to the cytoplasm. It carries out the reaction Release of an N-terminal pyroglutamyl group from a polypeptide, the second amino acid generally not being Pro.. Functionally, removes 5-oxoproline from various penultimate amino acid residues except L-proline. The chain is Pyrrolidone-carboxylate peptidase from Staphylococcus carnosus (strain TM300).